Consider the following 570-residue polypeptide: Protein FAM227A (570 aa).

Positions 87 to 99 are enriched in basic and acidic residues; it reads LREKTRSSPEDKV. 3 disordered regions span residues 87–112, 336–374, and 519–570; these read LREK…CKGS, PAQS…QNTA, and KAAD…TSKP. Tyr343 is subject to Phosphotyrosine. Over residues 345-362 the composition is skewed to polar residues; it reads PQSSSANSPSEKTSSAKQ. Phosphoserine occurs at positions 348 and 349. 2 stretches are compositionally biased toward basic and acidic residues: residues 363–374 and 540–562; these read NSEKSLRMQNTA and SPDK…EVEH.

Belongs to the FAM227 family.

The chain is Protein FAM227A (FAM227A) from Homo sapiens (Human).